Consider the following 614-residue polypeptide: 1-deoxy-D-xylulose-5-phosphate synthase (614 aa).

Residues histidine 74 and 115-117 (AHS) contribute to the thiamine diphosphate site. Position 146 (aspartate 146) interacts with Mg(2+). Thiamine diphosphate-binding positions include 147–148 (GA), asparagine 175, tyrosine 282, and glutamate 363. Asparagine 175 is a binding site for Mg(2+).

It belongs to the transketolase family. DXPS subfamily. Homodimer. Mg(2+) serves as cofactor. It depends on thiamine diphosphate as a cofactor.

The catalysed reaction is D-glyceraldehyde 3-phosphate + pyruvate + H(+) = 1-deoxy-D-xylulose 5-phosphate + CO2. It participates in metabolic intermediate biosynthesis; 1-deoxy-D-xylulose 5-phosphate biosynthesis; 1-deoxy-D-xylulose 5-phosphate from D-glyceraldehyde 3-phosphate and pyruvate: step 1/1. Its function is as follows. Catalyzes the acyloin condensation reaction between C atoms 2 and 3 of pyruvate and glyceraldehyde 3-phosphate to yield 1-deoxy-D-xylulose-5-phosphate (DXP). The chain is 1-deoxy-D-xylulose-5-phosphate synthase from Nitrosospira multiformis (strain ATCC 25196 / NCIMB 11849 / C 71).